Here is a 282-residue protein sequence, read N- to C-terminus: tRNA uridine(34) hydroxylase (282 aa).

The Rhodanese domain maps to 128 to 222 (EGRPVVMLDT…YFEEVGGDHY (95 aa)). Catalysis depends on Cys182, which acts as the Cysteine persulfide intermediate.

This sequence belongs to the TrhO family.

It catalyses the reaction uridine(34) in tRNA + AH2 + O2 = 5-hydroxyuridine(34) in tRNA + A + H2O. Catalyzes oxygen-dependent 5-hydroxyuridine (ho5U) modification at position 34 in tRNAs. The polypeptide is tRNA uridine(34) hydroxylase (Cupriavidus pinatubonensis (strain JMP 134 / LMG 1197) (Cupriavidus necator (strain JMP 134))).